Here is a 505-residue protein sequence, read N- to C-terminus: Deoxyguanosinetriphosphate triphosphohydrolase (505 aa).

The 208-residue stretch at 66–273 (RLTHSMEVQQ…MEAADDISYC (208 aa)) folds into the HD domain.

This sequence belongs to the dGTPase family. Type 1 subfamily. Homotetramer. Mg(2+) serves as cofactor.

The enzyme catalyses dGTP + H2O = 2'-deoxyguanosine + triphosphate + H(+). Functionally, dGTPase preferentially hydrolyzes dGTP over the other canonical NTPs. The chain is Deoxyguanosinetriphosphate triphosphohydrolase from Salmonella paratyphi A (strain AKU_12601).